Consider the following 398-residue polypeptide: Ornithine aminotransferase (398 aa).

Lys256 is modified (N6-(pyridoxal phosphate)lysine).

It belongs to the class-III pyridoxal-phosphate-dependent aminotransferase family. OAT subfamily. Pyridoxal 5'-phosphate is required as a cofactor.

Its subcellular location is the cytoplasm. It catalyses the reaction a 2-oxocarboxylate + L-ornithine = L-glutamate 5-semialdehyde + an L-alpha-amino acid. Its pathway is amino-acid biosynthesis; L-proline biosynthesis; L-glutamate 5-semialdehyde from L-ornithine: step 1/1. Its function is as follows. Catalyzes the interconversion of ornithine to glutamate semialdehyde. This chain is Ornithine aminotransferase, found in Oceanobacillus iheyensis (strain DSM 14371 / CIP 107618 / JCM 11309 / KCTC 3954 / HTE831).